The primary structure comprises 513 residues: Ferulic acid decarboxylase 1 (513 aa).

Residues asparagine 174, histidine 197, and glutamate 240 each contribute to the Mn(2+) site. Residues 174 to 179, 196 to 197, and glutamate 240 each bind prenylated FMN; these read NWSIAR and QH. Catalysis depends on glutamate 289, which acts as the Proton donor. Lysine 405 serves as a coordination point for prenylated FMN.

The protein belongs to the UbiD family. UbiD-like/FDC subfamily. Homodimer. May form higher order oligomers. Requires Mn(2+) as cofactor. It depends on prenylated FMN as a cofactor.

Its subcellular location is the cytoplasm. The enzyme catalyses (E)-4-coumarate + H(+) = 4-vinylphenol + CO2. The catalysed reaction is (E)-cinnamate + H(+) = styrene + CO2. It carries out the reaction (E)-ferulate + H(+) = 2-methoxy-4-vinylphenol + CO2. In terms of biological role, catalyzes the reversible decarboxylation of aromatic carboxylic acids like ferulic acid, p-coumaric acid or cinnamic acid, producing the corresponding vinyl derivatives 4-vinylphenol, 4-vinylguaiacol, and styrene, respectively, which play the role of aroma metabolites. This is Ferulic acid decarboxylase 1 from Candida dubliniensis (strain CD36 / ATCC MYA-646 / CBS 7987 / NCPF 3949 / NRRL Y-17841) (Yeast).